Consider the following 156-residue polypeptide: ATP synthase subunit b (156 aa).

The helical transmembrane segment at Ile-3–Thr-23 threads the bilayer.

The protein belongs to the ATPase B chain family. In terms of assembly, F-type ATPases have 2 components, F(1) - the catalytic core - and F(0) - the membrane proton channel. F(1) has five subunits: alpha(3), beta(3), gamma(1), delta(1), epsilon(1). F(0) has three main subunits: a(1), b(2) and c(10-14). The alpha and beta chains form an alternating ring which encloses part of the gamma chain. F(1) is attached to F(0) by a central stalk formed by the gamma and epsilon chains, while a peripheral stalk is formed by the delta and b chains.

The protein localises to the cell inner membrane. F(1)F(0) ATP synthase produces ATP from ADP in the presence of a proton or sodium gradient. F-type ATPases consist of two structural domains, F(1) containing the extramembraneous catalytic core and F(0) containing the membrane proton channel, linked together by a central stalk and a peripheral stalk. During catalysis, ATP synthesis in the catalytic domain of F(1) is coupled via a rotary mechanism of the central stalk subunits to proton translocation. In terms of biological role, component of the F(0) channel, it forms part of the peripheral stalk, linking F(1) to F(0). This chain is ATP synthase subunit b, found in Stenotrophomonas maltophilia (strain R551-3).